We begin with the raw amino-acid sequence, 293 residues long: Elongation factor Ts (293 aa).

The involved in Mg(2+) ion dislocation from EF-Tu stretch occupies residues 79 to 82 (TDFV).

This sequence belongs to the EF-Ts family.

It localises to the cytoplasm. Its function is as follows. Associates with the EF-Tu.GDP complex and induces the exchange of GDP to GTP. It remains bound to the aminoacyl-tRNA.EF-Tu.GTP complex up to the GTP hydrolysis stage on the ribosome. This Bacillus licheniformis (strain ATCC 14580 / DSM 13 / JCM 2505 / CCUG 7422 / NBRC 12200 / NCIMB 9375 / NCTC 10341 / NRRL NRS-1264 / Gibson 46) protein is Elongation factor Ts.